Consider the following 315-residue polypeptide: Secreted frizzled-related protein 3 (315 aa).

Positions 1–21 (MWRGLPALALAALLLLGRAPA) are cleaved as a signal peptide. Residues 22 to 142 (GRAAACEPVR…LYDRGVCISP (121 aa)) enclose the FZ domain. 5 cysteine pairs are disulfide-bonded: Cys-27–Cys-88, Cys-35–Cys-81, Cys-72–Cys-111, Cys-100–Cys-139, and Cys-104–Cys-128. Asn-41 is a glycosylation site (N-linked (GlcNAc...) asparagine). One can recognise an NTR domain in the interval 170 to 290 (CKCKPIKATQ…WDQKLRHLGK (121 aa)). The tract at residues 284–315 (KLRHLGKGKGEPGQSDSALKTGKPGNARQTRS) is disordered.

Belongs to the secreted frizzled-related protein (sFRP) family.

The protein resides in the secreted. Functionally, soluble frizzled-related proteins (sFRPS) function as modulators of Wnt signaling through direct interaction with Wnts. They have a role in regulating cell growth and differentiation in specific cell types. SFRP3/FRZB appears to be involved in limb skeletogenesis. Antagonist of Wnt8 signaling. Regulates chondrocyte maturation and long bone development. The protein is Secreted frizzled-related protein 3 (FRZB) of Gallus gallus (Chicken).